The sequence spans 179 residues: Large ribosomal subunit protein bL9 (179 aa).

The protein belongs to the bacterial ribosomal protein bL9 family.

Functionally, binds to the 23S rRNA. The chain is Large ribosomal subunit protein bL9 from Bartonella bacilliformis (strain ATCC 35685 / KC583 / Herrer 020/F12,63).